Consider the following 572-residue polypeptide: Probable D-xylulose kinase A (572 aa).

The substrate site is built by His-95, Arg-166, Asp-282, and Asn-283. Residues Trp-365, Gly-470–Gly-471, and Asn-474 contribute to the ATP site.

This sequence belongs to the FGGY kinase family.

Its subcellular location is the cytoplasm. It catalyses the reaction D-xylulose + ATP = D-xylulose 5-phosphate + ADP + H(+). Its function is as follows. Highly specific D-xylulose kinase which participates in the catabolism of xylose. Xylose is a major component of hemicelluloses such as xylan. Most fungi utilize D-xylose via three enzymatic reactions, xylose reductase (XR), xylitol dehydrogenase (XDH), and xylulokinase, to form xylulose 5-phosphate, which enters pentose phosphate pathway. In Aspergillus oryzae (strain ATCC 42149 / RIB 40) (Yellow koji mold), this protein is Probable D-xylulose kinase A (xkiA).